The following is a 409-amino-acid chain: Transforming growth factor beta-3 proprotein (409 aa).

An N-terminal signal peptide occupies residues 1-21 (MHLQRALVVLALLNFATVSLS). Asn-72, Asn-133, and Asn-140 each carry an N-linked (GlcNAc...) asparagine glycan. The Cell attachment site signature appears at 259 to 261 (RGD). 4 cysteine pairs are disulfide-bonded: Cys-304–Cys-313, Cys-312–Cys-375, Cys-341–Cys-406, and Cys-345–Cys-408.

Belongs to the TGF-beta family. As to quaternary structure, interacts with ASPN. Latency-associated peptide: Homodimer; disulfide-linked. Latency-associated peptide: Interacts with Transforming growth factor beta-3 (TGF-beta-3) chain; interaction is non-covalent and maintains (TGF-beta-3) in a latent state. Latency-associated peptide: Interacts with LRRC32/GARP; leading to regulate activation of TGF-beta-3 and promote epithelial fusion during palate development. Latency-associated peptide: Interacts (via cell attachment site) with integrins, leading to release of the active TGF-beta-3. Transforming growth factor beta-3: Homodimer; disulfide-linked. Transforming growth factor beta-3: Interacts with TGF-beta receptors (TGFBR1 and TGFBR2), leading to signal transduction. Transforming growth factor beta-3 proprotein: The precursor proprotein is cleaved in the Golgi apparatus to form Transforming growth factor beta-3 (TGF-beta-3) and Latency-associated peptide (LAP) chains, which remain non-covalently linked, rendering TGF-beta-3 inactive.

The protein resides in the secreted. It is found in the extracellular space. Its subcellular location is the extracellular matrix. Transforming growth factor beta-3 proprotein: Precursor of the Latency-associated peptide (LAP) and Transforming growth factor beta-3 (TGF-beta-3) chains, which constitute the regulatory and active subunit of TGF-beta-3, respectively. Its function is as follows. Required to maintain the Transforming growth factor beta-3 (TGF-beta-3) chain in a latent state during storage in extracellular matrix. Associates non-covalently with TGF-beta-3 and regulates its activation via interaction with 'milieu molecules', such as LTBP1 and LRRC32/GARP, that control activation of TGF-beta-3. Interaction with integrins results in distortion of the Latency-associated peptide chain and subsequent release of the active TGF-beta-3. In terms of biological role, transforming growth factor beta-3: Multifunctional protein that regulates embryogenesis and cell differentiation and is required in various processes such as secondary palate development. Activation into mature form follows different steps: following cleavage of the proprotein in the Golgi apparatus, Latency-associated peptide (LAP) and Transforming growth factor beta-3 (TGF-beta-3) chains remain non-covalently linked rendering TGF-beta-3 inactive during storage in extracellular matrix. At the same time, LAP chain interacts with 'milieu molecules', such as LTBP1 and LRRC32/GARP that control activation of TGF-beta-3 and maintain it in a latent state during storage in extracellular milieus. TGF-beta-3 is released from LAP by integrins: integrin-binding results in distortion of the LAP chain and subsequent release of the active TGF-beta-3. Once activated following release of LAP, TGF-beta-3 acts by binding to TGF-beta receptors (TGFBR1 and TGFBR2), which transduce signal. The polypeptide is Transforming growth factor beta-3 proprotein (TGFB3) (Sus scrofa (Pig)).